The primary structure comprises 228 residues: Putative N-acetylmannosamine-6-phosphate 2-epimerase (228 aa).

It belongs to the NanE family.

It catalyses the reaction an N-acyl-D-glucosamine 6-phosphate = an N-acyl-D-mannosamine 6-phosphate. It functions in the pathway amino-sugar metabolism; N-acetylneuraminate degradation; D-fructose 6-phosphate from N-acetylneuraminate: step 3/5. Converts N-acetylmannosamine-6-phosphate (ManNAc-6-P) to N-acetylglucosamine-6-phosphate (GlcNAc-6-P). This Thermosynechococcus vestitus (strain NIES-2133 / IAM M-273 / BP-1) protein is Putative N-acetylmannosamine-6-phosphate 2-epimerase.